We begin with the raw amino-acid sequence, 308 residues long: Homogentisate phytyltransferase (308 aa).

8 helical membrane passes run Pro13–Gly33, Leu44–Leu64, Leu104–Ile124, Ala142–Phe162, Ile173–Phe193, Val219–Ala241, Leu245–Trp263, and Phe279–Trp299.

Belongs to the UbiA prenyltransferase family.

It is found in the membrane. The catalysed reaction is phytyl diphosphate + homogentisate + H(+) = 2-methyl-6-phytyl-1,4-benzene-1,4-diol + CO2 + diphosphate. It participates in cofactor biosynthesis; tocopherol biosynthesis. Its function is as follows. Involved in the synthesis of tocopherol (vitamin E). Catalyzes the condensation of homogentisate and phytyl diphosphate to form dimethylphytylhydrquinone. This Synechocystis sp. (strain ATCC 27184 / PCC 6803 / Kazusa) protein is Homogentisate phytyltransferase.